The sequence spans 443 residues: Putative metabolite transport protein YaaU (443 aa).

The Cytoplasmic portion of the chain corresponds to 1–18 (MQPSRNFDDLKFSSIHRR). Residues 19-39 (ILLWGSGGPFLDGYVLVMIGV) traverse the membrane as a helical segment. The Periplasmic segment spans residues 40–53 (ALEQLTPALKLDAD). The chain crosses the membrane as a helical span at residues 54–74 (WIGLLGAGTLAGLFVGTSLFG). At 75–84 (YISDKVGRRK) the chain is on the cytoplasmic side. Residues 85–105 (MFLIDIIAIGVISVATMFVSS) form a helical membrane-spanning segment. At 106–113 (PVELLVMR) the chain is on the periplasmic side. The chain crosses the membrane as a helical span at residues 114-134 (VLIGIVIGADYPIATSMITEF). The Cytoplasmic portion of the chain corresponds to 135–145 (SSTRQRAFSIS). A helical membrane pass occupies residues 146-166 (FIAAMWYVGATCADLVGYWLY). At 167–173 (DVEGGWR) the chain is on the periplasmic side. A helical transmembrane segment spans residues 174-194 (WMLGSAAIPCLLILIGRFELP). Over 195–241 (ESPRWLLRKGRVKECEEMMIKLFGEPVAFDEEQPQQTRFRDLFNRRH) the chain is Cytoplasmic. The chain crosses the membrane as a helical span at residues 242 to 262 (FPFVLFVAAIWTCQVIPMFAI). Topologically, residues 263 to 282 (YTFGPQIVGLLGLGVGKNAA) are periplasmic. The helical transmembrane segment at 283–303 (LGNVVISLFFMLGCIPPMLWL) threads the bilayer. Residues 304–309 (NTAGRR) lie on the Cytoplasmic side of the membrane. The chain crosses the membrane as a helical span at residues 310–329 (PLLIGSFAMMTLALAVLGLI). The Periplasmic segment spans residues 330 to 334 (PDMGI). The chain crosses the membrane as a helical span at residues 335–357 (WLVVMAFAVYAFFSGGPGNLQWL). Residues 358–373 (YPNELFPTDIRASAVG) lie on the Cytoplasmic side of the membrane. Residues 374-394 (VIMSLSRIGTIVSTWALPIFI) traverse the membrane as a helical segment. The Periplasmic segment spans residues 395–401 (NNYGISN). A helical membrane pass occupies residues 402-422 (TMLMGAGISLFGLLISVAFAP). The Cytoplasmic portion of the chain corresponds to 423–443 (ETRGMSLAQTSNMTIRGQRMG).

The protein belongs to the major facilitator superfamily. Sugar transporter (TC 2.A.1.1) family.

The protein resides in the cell inner membrane. The protein is Putative metabolite transport protein YaaU (yaaU) of Escherichia coli (strain K12).